A 284-amino-acid polypeptide reads, in one-letter code: MTAIKLDGNLYRDEIFADLAQRVAALKEKGIVPGLATVLVGDDPASHSYVKMKHRDCEQIGVNSIRRDLPADISQEELFAVIDELNADDSCTGYIVQLPLPKHLDENAVLERIDPAKDADGLHPVNLGKLVLNEPAPLPCTPNGSISLLRRFGIELNGAKVVVIGRGVTVGRPIGLMLTRRSENSTVTLCHTGTKDLAAETRAADVIVAAAGQPHMLTADMVKPGAAVLDVGVSRKDGKLLGDVHPDVWEVAGAVSPNPGGVGPLTRAFLVHNVVERAEKLAGL.

NADP(+)-binding positions include 165 to 167 (GRG), Thr-192, and Val-233.

It belongs to the tetrahydrofolate dehydrogenase/cyclohydrolase family. Homodimer.

It carries out the reaction (6R)-5,10-methylene-5,6,7,8-tetrahydrofolate + NADP(+) = (6R)-5,10-methenyltetrahydrofolate + NADPH. The enzyme catalyses (6R)-5,10-methenyltetrahydrofolate + H2O = (6R)-10-formyltetrahydrofolate + H(+). The protein operates within one-carbon metabolism; tetrahydrofolate interconversion. Catalyzes the oxidation of 5,10-methylenetetrahydrofolate to 5,10-methenyltetrahydrofolate and then the hydrolysis of 5,10-methenyltetrahydrofolate to 10-formyltetrahydrofolate. The sequence is that of Bifunctional protein FolD from Corynebacterium efficiens (strain DSM 44549 / YS-314 / AJ 12310 / JCM 11189 / NBRC 100395).